A 566-amino-acid polypeptide reads, in one-letter code: Cyclin-dependent kinase-like 2 (566 aa).

A Protein kinase domain is found at 4–287; that stretch reads YENLGLVGEG…CAELLHHDFF (284 aa). ATP is bound by residues 10–18 and Lys-33; that span reads VGEGSYGMV. Residues 45-51 carry the [NKR]KIAxRE motif; the sequence is KKIAMRE. The active-site Proton acceptor is Asp-126. Disordered regions lie at residues 307-334 and 545-566; these read DARN…GEER and QVSG…EHQH. Residues 320–334 are compositionally biased toward basic and acidic residues; it reads RKKEKEKDDSLGEER.

This sequence belongs to the protein kinase superfamily. CMGC Ser/Thr protein kinase family. CDC2/CDKX subfamily.

It localises to the cytoplasm. The protein resides in the nucleus. The catalysed reaction is L-seryl-[protein] + ATP = O-phospho-L-seryl-[protein] + ADP + H(+). It carries out the reaction L-threonyl-[protein] + ATP = O-phospho-L-threonyl-[protein] + ADP + H(+). This Oryctolagus cuniculus (Rabbit) protein is Cyclin-dependent kinase-like 2.